We begin with the raw amino-acid sequence, 73 residues long: Putative membrane protein insertion efficiency factor (73 aa).

This sequence belongs to the UPF0161 family.

Its subcellular location is the cell inner membrane. Its function is as follows. Could be involved in insertion of integral membrane proteins into the membrane. The polypeptide is Putative membrane protein insertion efficiency factor (Rickettsia bellii (strain OSU 85-389)).